The following is a 67-amino-acid chain: Large ribosomal subunit protein uL29 (67 aa).

Belongs to the universal ribosomal protein uL29 family.

This is Large ribosomal subunit protein uL29 from Acetivibrio thermocellus (strain ATCC 27405 / DSM 1237 / JCM 9322 / NBRC 103400 / NCIMB 10682 / NRRL B-4536 / VPI 7372) (Clostridium thermocellum).